A 37-amino-acid polypeptide reads, in one-letter code: Large ribosomal subunit protein bL36c (37 aa).

This sequence belongs to the bacterial ribosomal protein bL36 family.

Its subcellular location is the plastid. It is found in the chloroplast. The polypeptide is Large ribosomal subunit protein bL36c (Nicotiana tomentosiformis (Tobacco)).